Here is an 83-residue protein sequence, read N- to C-terminus: Apolipoprotein C-I, acidic form (83 aa).

A signal peptide spans 1–26; sequence MRLFLSLPVLVVVLSIVLEGPAPAQG.

Belongs to the apolipoprotein C1 family.

It localises to the secreted. This chain is Apolipoprotein C-I, acidic form (APOC1A), found in Pan paniscus (Pygmy chimpanzee).